Consider the following 452-residue polypeptide: Plasminogen-binding protein PgbA (452 aa).

Residues 265–452 (QEAIKEPKKA…RRKALEAGKK (188 aa)) are disordered. Basic and acidic residues-rich tracts occupy residues 284–310 (LEEKNYQKAERKLDAKEERRYLRDERK) and 317–373 (KAME…KEPS). Residues 374-391 (DGNNATQQGEKQNAPKEN) are compositionally biased toward polar residues. A compositionally biased stretch (basic and acidic residues) spans 392–452 (NAQKEENKPN…RRKALEAGKK (61 aa)).

The protein resides in the cell surface. Its function is as follows. Binds plasminogen, specifically, and in a concentration and lysine-dependent manner. Plasminogen is the precursor of plasmin, a serine protease that cleaves fibrin, fibronectin, laminin and vitronectin. Acquisition of plasminogen/plasmin could enable H.pylori to degrade host components. This chain is Plasminogen-binding protein PgbA (pgbA), found in Helicobacter pylori (strain ATCC 700392 / 26695) (Campylobacter pylori).